Consider the following 426-residue polypeptide: Cytochrome c biogenesis protein Ccs1 (426 aa).

A run of 3 helical transmembrane segments spans residues 11–31, 70–90, and 153–173; these read LKFAIALLLLISITITFGSII, NFWFISLLLSLGISLIACTFF, and IAPVFVHLSIILILLGSIFAS.

Belongs to the Ccs1/CcsB family. In terms of assembly, may interact with CcsA.

The protein resides in the plastid. The protein localises to the chloroplast thylakoid membrane. Required during biogenesis of c-type cytochromes (cytochrome c6 and cytochrome f) at the step of heme attachment. The chain is Cytochrome c biogenesis protein Ccs1 from Heterosigma akashiwo (strain CCMP452 / OLISTH).